The following is a 412-amino-acid chain: Palmitoyltransferase ZDHHC6 (412 aa).

Topologically, residues 1-24 (MNILSAIIVFENLHEVKRLFHWGP) are cytoplasmic. The chain crosses the membrane as a helical span at residues 25–45 (IIALTVIGVCSSMAILDSIIW). Residues 46–57 (YWPLDTTGGSIN) are Lumenal-facing. A helical membrane pass occupies residues 58 to 78 (FIMLINWTVLILYNYFNAMFV). Residues 79 to 143 (GPGYIPLEWK…NCCGHLNHAY (65 aa)) lie on the Cytoplasmic side of the membrane. A DHHC domain is found at 99 to 149 (QFCRLCQGYKAPRSHHCRKCNRCVMKMDHHCPWINNCCGHLNHAYFTSFLL). Cys-129 serves as the catalytic S-palmitoyl cysteine intermediate. The chain crosses the membrane as a helical span at residues 144 to 164 (FTSFLLLAPLGCIHAALIFIM). Topologically, residues 165 to 205 (TMYTQLYDRISFGWSSVKIDMSAARHIHHPIMPFSIAAFAA) are lumenal. Residues 206–226 (TLFALGLALGTTIAVGMLFFI) traverse the membrane as a helical segment. Residues 227–412 (QMKVILRNRT…NSTSEEKKEQ (186 aa)) are Cytoplasmic-facing. One can recognise an SH3 domain in the interval 313-398 (QRSVEYRVVE…PRRCVEKCLY (86 aa)). S-palmitoyl cysteine attachment occurs at residues Cys-328, Cys-329, and Cys-343. The short motif at 409–412 (KKEQ) is the Di-lysine motif element.

Belongs to the DHHC palmitoyltransferase family.

It is found in the endoplasmic reticulum membrane. It catalyses the reaction L-cysteinyl-[protein] + hexadecanoyl-CoA = S-hexadecanoyl-L-cysteinyl-[protein] + CoA. The enzyme catalyses L-cysteinyl-[protein] + octadecanoyl-CoA = S-octadecanoyl-L-cysteinyl-[protein] + CoA. Functionally, endoplasmic reticulum palmitoyl acyltransferase that probably catalyzes the addition of palmitate onto various protein substrates and is involved in a variety of cellular processes. Could also function as a stearoyltransferase. The protein is Palmitoyltransferase ZDHHC6 of Danio rerio (Zebrafish).